Here is a 712-residue protein sequence, read N- to C-terminus: UvrABC system protein B (712 aa).

A Helicase ATP-binding domain is found at arginine 35–arginine 421. ATP is bound at residue glycine 48–serine 55. A Beta-hairpin motif is present at residues tyrosine 101–isoleucine 124. A Helicase C-terminal domain is found at glutamine 438–valine 604. Residues threonine 625–glutamate 655 form a disordered region. The 36-residue stretch at alanine 667–glutamate 702 folds into the UVR domain.

The protein belongs to the UvrB family. Forms a heterotetramer with UvrA during the search for lesions. Interacts with UvrC in an incision complex.

The protein localises to the cytoplasm. Its function is as follows. The UvrABC repair system catalyzes the recognition and processing of DNA lesions. A damage recognition complex composed of 2 UvrA and 2 UvrB subunits scans DNA for abnormalities. Upon binding of the UvrA(2)B(2) complex to a putative damaged site, the DNA wraps around one UvrB monomer. DNA wrap is dependent on ATP binding by UvrB and probably causes local melting of the DNA helix, facilitating insertion of UvrB beta-hairpin between the DNA strands. Then UvrB probes one DNA strand for the presence of a lesion. If a lesion is found the UvrA subunits dissociate and the UvrB-DNA preincision complex is formed. This complex is subsequently bound by UvrC and the second UvrB is released. If no lesion is found, the DNA wraps around the other UvrB subunit that will check the other stand for damage. This is UvrABC system protein B from Streptomyces coelicolor (strain ATCC BAA-471 / A3(2) / M145).